The chain runs to 238 residues: Uridylate kinase (238 aa).

12–15 (KLSG) is an ATP binding site. The involved in allosteric activation by GTP stretch occupies residues 20–25 (GQQGFG). G54 contacts UMP. The ATP site is built by G55 and R59. Residues D74 and 135–142 (TGNPFFTT) contribute to the UMP site. Residues T162, N163, Y168, and D171 each contribute to the ATP site.

The protein belongs to the UMP kinase family. In terms of assembly, homohexamer.

The protein resides in the cytoplasm. It catalyses the reaction UMP + ATP = UDP + ADP. It participates in pyrimidine metabolism; CTP biosynthesis via de novo pathway; UDP from UMP (UMPK route): step 1/1. Its activity is regulated as follows. Allosterically activated by GTP. Inhibited by UTP. In terms of biological role, catalyzes the reversible phosphorylation of UMP to UDP. This is Uridylate kinase from Bradyrhizobium diazoefficiens (strain JCM 10833 / BCRC 13528 / IAM 13628 / NBRC 14792 / USDA 110).